Reading from the N-terminus, the 304-residue chain is Glutaminase (304 aa).

Residues serine 63, asparagine 114, glutamate 158, asparagine 165, tyrosine 189, tyrosine 240, and valine 258 each contribute to the substrate site.

The protein belongs to the glutaminase family. As to quaternary structure, homotetramer.

The catalysed reaction is L-glutamine + H2O = L-glutamate + NH4(+). The chain is Glutaminase from Shewanella amazonensis (strain ATCC BAA-1098 / SB2B).